The chain runs to 218 residues: Tegument protein UL51 homolog (218 aa).

Residue C11 is the site of S-palmitoyl cysteine; by host attachment. Positions 199–218 (APPPVVRQPEHSGPTELALT) are disordered.

Belongs to the herpesviridae UL51 family. Homodimer. Interacts with BBRF2; the BBRF2-BSRF1 complexes oligomerize which might play a role in tethering the viral nucleocapsids to the host Golgi membrane during secondary envelopment. Interacts with BGLF3.5. Interacts with BALF1. Interacts with glycoprotein gB. Interacts with glycoprotein heterodimer gH/gL. Post-translationally, phosphorylated. In terms of processing, palmitoylation is necessary for Golgi localization.

It is found in the host cytoplasm. The protein resides in the virion. The protein localises to the host Golgi apparatus. In terms of biological role, plays several roles during the time course of infection, including egress of virus particles from the perinuclear space and secondary envelopment of cytoplasmic capsids that bud into specific trans-Golgi network (TGN)-derived membranes. The sequence is that of Tegument protein UL51 homolog from Homo sapiens (Human).